A 379-amino-acid chain; its full sequence is Mannitol-1-phosphate 5-dehydrogenase (379 aa).

3–14 (ALHFGAGNIGRG) is an NAD(+) binding site.

This sequence belongs to the mannitol dehydrogenase family.

It carries out the reaction D-mannitol 1-phosphate + NAD(+) = beta-D-fructose 6-phosphate + NADH + H(+). The polypeptide is Mannitol-1-phosphate 5-dehydrogenase (Bacillus licheniformis (strain ATCC 14580 / DSM 13 / JCM 2505 / CCUG 7422 / NBRC 12200 / NCIMB 9375 / NCTC 10341 / NRRL NRS-1264 / Gibson 46)).